The primary structure comprises 1389 residues: uncharacterized protein (1389 aa).

Residues 43 to 94 adopt a coiled-coil conformation; sequence STIAQRVSQLENEVAEINVALAEHVNELNSQEKRIDKLEKTVKKKKSNCSDD. Positions 294 to 353 are disordered; sequence HKNRRSKSDNSDLSEYSSSNSDDSECTDSDGSSCSTDGSPDCTESENTESHRSHGKKKHR. Composition is skewed to low complexity over residues 304–314 and 322–335; these read SDLSEYSSSNS and SDGS…SPDC. WD repeat units lie at residues 867 to 907, 1017 to 1056, and 1115 to 1156; these read TFTD…VKHI, GYNE…TPSG, and GISN…ILST.

It localises to the virion. This is an uncharacterized protein from Acanthamoeba polyphaga (Amoeba).